Here is a 324-residue protein sequence, read N- to C-terminus: Ribosomal RNA small subunit methyltransferase H (324 aa).

S-adenosyl-L-methionine contacts are provided by residues 35-37 (GGH), Asp-55, Phe-85, Asp-103, and Gln-110.

It belongs to the methyltransferase superfamily. RsmH family.

Its subcellular location is the cytoplasm. It catalyses the reaction cytidine(1402) in 16S rRNA + S-adenosyl-L-methionine = N(4)-methylcytidine(1402) in 16S rRNA + S-adenosyl-L-homocysteine + H(+). Functionally, specifically methylates the N4 position of cytidine in position 1402 (C1402) of 16S rRNA. The sequence is that of Ribosomal RNA small subunit methyltransferase H from Solidesulfovibrio magneticus (strain ATCC 700980 / DSM 13731 / RS-1) (Desulfovibrio magneticus).